The following is a 208-amino-acid chain: Sodium/potassium-transporting ATPase subunit beta-1-interacting protein 4 (208 aa).

Helical transmembrane passes span 35–55, 62–82, and 151–171; these read APIL…FGTI, VMVY…IICF, and CLQI…VSVF.

Belongs to the NKAIN family. Interacts with ATP1B1.

The protein localises to the cell membrane. This is Sodium/potassium-transporting ATPase subunit beta-1-interacting protein 4 (NKAIN4) from Homo sapiens (Human).